Reading from the N-terminus, the 480-residue chain is Mannose-1-phosphate guanylyltransferase ManC (480 aa).

This sequence belongs to the mannose-6-phosphate isomerase type 2 family.

It carries out the reaction alpha-D-mannose 1-phosphate + GTP + H(+) = GDP-alpha-D-mannose + diphosphate. The protein operates within nucleotide-sugar biosynthesis; GDP-alpha-D-mannose biosynthesis; GDP-alpha-D-mannose from alpha-D-mannose 1-phosphate (GTP route): step 1/1. Functionally, involved in the biosynthesis of the capsular polysaccharide colanic acid. The polypeptide is Mannose-1-phosphate guanylyltransferase ManC (manC) (Salmonella typhimurium (strain LT2 / SGSC1412 / ATCC 700720)).